The sequence spans 72 residues: SPbeta prophage-derived uncharacterized protein YoqN (72 aa).

This is SPbeta prophage-derived uncharacterized protein YoqN (yoqN) from Bacillus subtilis (strain 168).